The following is a 354-amino-acid chain: Probable L-ascorbate-6-phosphate lactonase UlaG (354 aa).

This sequence belongs to the UlaG family. It depends on a divalent metal cation as a cofactor.

It localises to the cytoplasm. It catalyses the reaction L-ascorbate 6-phosphate + H2O = 3-dehydro-L-gulonate 6-phosphate. It participates in cofactor degradation; L-ascorbate degradation; D-xylulose 5-phosphate from L-ascorbate: step 1/4. In terms of biological role, probably catalyzes the hydrolysis of L-ascorbate-6-P into 3-keto-L-gulonate-6-P. Is essential for L-ascorbate utilization under anaerobic conditions. This Shigella flexneri protein is Probable L-ascorbate-6-phosphate lactonase UlaG.